Consider the following 659-residue polypeptide: UvrABC system protein B (659 aa).

Positions 27 to 414 (EGLEQNKKSQ…AHGEIVKQII (388 aa)) constitute a Helicase ATP-binding domain. An ATP-binding site is contributed by 40–47 (GVTGSGKT). The Beta-hairpin motif lies at 93-116 (YFDYYRPEAYMPNTDTYIDKTTKS). Residues 432-594 (QVEDMFDEIQ…IIPKTIIKPI (163 aa)) enclose the Helicase C-terminal domain. Residues 624–659 (EALVKDLRNQMLDASKQLNFERAAELRDIILELEAN) form the UVR domain.

Belongs to the UvrB family. As to quaternary structure, forms a heterotetramer with UvrA during the search for lesions. Interacts with UvrC in an incision complex.

The protein resides in the cytoplasm. In terms of biological role, the UvrABC repair system catalyzes the recognition and processing of DNA lesions. A damage recognition complex composed of 2 UvrA and 2 UvrB subunits scans DNA for abnormalities. Upon binding of the UvrA(2)B(2) complex to a putative damaged site, the DNA wraps around one UvrB monomer. DNA wrap is dependent on ATP binding by UvrB and probably causes local melting of the DNA helix, facilitating insertion of UvrB beta-hairpin between the DNA strands. Then UvrB probes one DNA strand for the presence of a lesion. If a lesion is found the UvrA subunits dissociate and the UvrB-DNA preincision complex is formed. This complex is subsequently bound by UvrC and the second UvrB is released. If no lesion is found, the DNA wraps around the other UvrB subunit that will check the other stand for damage. The chain is UvrABC system protein B from Mycoplasma mobile (strain ATCC 43663 / 163K / NCTC 11711) (Mesomycoplasma mobile).